The following is a 434-amino-acid chain: D-amino acid dehydrogenase (434 aa).

3–17 (VIVLGSGVIGTTTAY) serves as a coordination point for FAD.

It belongs to the DadA oxidoreductase family. FAD serves as cofactor.

The enzyme catalyses a D-alpha-amino acid + A + H2O = a 2-oxocarboxylate + AH2 + NH4(+). Oxidative deamination of D-amino acids. This Bordetella parapertussis (strain 12822 / ATCC BAA-587 / NCTC 13253) protein is D-amino acid dehydrogenase.